A 348-amino-acid polypeptide reads, in one-letter code: MAPRKSASVSSRKTAAKPAKKDFAGGTIAEFSKEDDLKAYREMLLIRRFEEKAGQLYGMGFIGGFCHLYIGQEAVVVGMQLALKEGDQVITGYRDHGHMLACGMSARGVMAELTGRRGGLSKGKGGSMHMFSKEKHFYGGHGIVGAQVSLGTGLAFANRYRGNDNVSLAYFGDGAANQGQVYESFNMAALWKLPVIYIVENNRYAMGTSVSRASAQTDFSQRGASFGIPGYQVDGMDVRAVKAAADEAVEHCRSGKGPIILEMLTYRYRGHSMSDPAKYRSKDEVQKMRSEHDPIEQVKARLTDKGWATEDELKQIDKEVRDIVADSADFAQSDPEPDVSELYTDILL.

Residues 1–21 form a disordered region; the sequence is MAPRKSASVSSRKTAAKPAKK.

As to quaternary structure, heterodimer of an alpha and a beta chain. Requires thiamine diphosphate as cofactor.

The enzyme catalyses N(6)-[(R)-lipoyl]-L-lysyl-[protein] + pyruvate + H(+) = N(6)-[(R)-S(8)-acetyldihydrolipoyl]-L-lysyl-[protein] + CO2. In terms of biological role, the pyruvate dehydrogenase complex catalyzes the overall conversion of pyruvate to acetyl-CoA and CO(2). It contains multiple copies of three enzymatic components: pyruvate dehydrogenase (E1), dihydrolipoamide acetyltransferase (E2) and lipoamide dehydrogenase (E3). This is Pyruvate dehydrogenase E1 component subunit alpha (pdhA) from Rhizobium meliloti (strain 1021) (Ensifer meliloti).